The sequence spans 288 residues: 4-hydroxy-3-methylbut-2-enyl diphosphate reductase (288 aa).

Residue cysteine 13 participates in [4Fe-4S] cluster binding. Residues histidine 41 and histidine 75 each contribute to the (2E)-4-hydroxy-3-methylbut-2-enyl diphosphate site. Positions 41 and 75 each coordinate dimethylallyl diphosphate. Residues histidine 41 and histidine 75 each contribute to the isopentenyl diphosphate site. [4Fe-4S] cluster is bound at residue cysteine 97. Histidine 130 provides a ligand contact to (2E)-4-hydroxy-3-methylbut-2-enyl diphosphate. Histidine 130 provides a ligand contact to dimethylallyl diphosphate. Histidine 130 lines the isopentenyl diphosphate pocket. Residue glutamate 132 is the Proton donor of the active site. (2E)-4-hydroxy-3-methylbut-2-enyl diphosphate is bound at residue threonine 168. Cysteine 199 is a [4Fe-4S] cluster binding site. Positions 227, 228, 229, and 271 each coordinate (2E)-4-hydroxy-3-methylbut-2-enyl diphosphate. Dimethylallyl diphosphate contacts are provided by serine 227, serine 228, asparagine 229, and serine 271. Isopentenyl diphosphate contacts are provided by serine 227, serine 228, asparagine 229, and serine 271.

This sequence belongs to the IspH family. It depends on [4Fe-4S] cluster as a cofactor.

The catalysed reaction is isopentenyl diphosphate + 2 oxidized [2Fe-2S]-[ferredoxin] + H2O = (2E)-4-hydroxy-3-methylbut-2-enyl diphosphate + 2 reduced [2Fe-2S]-[ferredoxin] + 2 H(+). It carries out the reaction dimethylallyl diphosphate + 2 oxidized [2Fe-2S]-[ferredoxin] + H2O = (2E)-4-hydroxy-3-methylbut-2-enyl diphosphate + 2 reduced [2Fe-2S]-[ferredoxin] + 2 H(+). It functions in the pathway isoprenoid biosynthesis; dimethylallyl diphosphate biosynthesis; dimethylallyl diphosphate from (2E)-4-hydroxy-3-methylbutenyl diphosphate: step 1/1. Its pathway is isoprenoid biosynthesis; isopentenyl diphosphate biosynthesis via DXP pathway; isopentenyl diphosphate from 1-deoxy-D-xylulose 5-phosphate: step 6/6. In terms of biological role, catalyzes the conversion of 1-hydroxy-2-methyl-2-(E)-butenyl 4-diphosphate (HMBPP) into a mixture of isopentenyl diphosphate (IPP) and dimethylallyl diphosphate (DMAPP). Acts in the terminal step of the DOXP/MEP pathway for isoprenoid precursor biosynthesis. This chain is 4-hydroxy-3-methylbut-2-enyl diphosphate reductase, found in Phocaeicola vulgatus (strain ATCC 8482 / DSM 1447 / JCM 5826 / CCUG 4940 / NBRC 14291 / NCTC 11154) (Bacteroides vulgatus).